Consider the following 258-residue polypeptide: Acyl-[acyl-carrier-protein]--UDP-N-acetylglucosamine O-acyltransferase (258 aa).

This sequence belongs to the transferase hexapeptide repeat family. LpxA subfamily. In terms of assembly, homotrimer.

It is found in the cytoplasm. It catalyses the reaction a (3R)-hydroxyacyl-[ACP] + UDP-N-acetyl-alpha-D-glucosamine = a UDP-3-O-[(3R)-3-hydroxyacyl]-N-acetyl-alpha-D-glucosamine + holo-[ACP]. Its pathway is glycolipid biosynthesis; lipid IV(A) biosynthesis; lipid IV(A) from (3R)-3-hydroxytetradecanoyl-[acyl-carrier-protein] and UDP-N-acetyl-alpha-D-glucosamine: step 1/6. Its function is as follows. Involved in the biosynthesis of lipid A, a phosphorylated glycolipid that anchors the lipopolysaccharide to the outer membrane of the cell. This is Acyl-[acyl-carrier-protein]--UDP-N-acetylglucosamine O-acyltransferase from Pseudomonas fluorescens (strain ATCC BAA-477 / NRRL B-23932 / Pf-5).